The chain runs to 597 residues: MPSARLLVLFGSQTGTAQDVSERLGREARRRQLSCRVEELDSYPVVNLINEPLVIFVCATTGQGDPPDNMKSFWRFIFRRSLPSTALRQMDFAVLGLGDSSYAKFNFVAKKLHRRLLQLGGSALLPVCLGDDQHELGPDAAIDPWLQDLWEKVLGPHPVPLNLDLSPPGVLWPSKFTLQFLKDTPSSGPEELCAAGTDPQGPPSELQPFLAPMVSNQRVTGPSHFQDVRLIEFDISGSGISFAAGDLVLIQPENTASHVQQFCQALGLDPEQHFTLQPREPGVTCPTRLPQPCSVRRLVSQYLDIASVPRRSFFELLACLSPHELEREKLWEFGSARGQEELCEYCTRPRRTALEVLCDFPHTAAAVPPDYLLDLLPLIRPRAFSIASSLRAHPSRLQILVAVVQYQTRLREPRRGLCSSWLASLDPAQGPVRVPLWVRSGGLTFPKTPDVPVIMVGPGTGVAPFRAAIQERVAQGETGNVLFFGCRRRDQDFYWEAEWEQLQARGCLTLVTAFSREQEQKVYVQHRLRALGPLVWELLDGRGAHFYLAGNAKYMPADVCDTLLSIFREEGGLSDPDAAAYLAQLQRTLRFQTETWA.

The region spanning 6 to 150 is the Flavodoxin-like domain; sequence LLVLFGSQTG…AIDPWLQDLW (145 aa). FMN-binding positions include 12–17, 59–62, 97–106, and Asp-132; these read SQTGTA, ATTG, and LGDSSYAKFN. One can recognise an FAD-binding FR-type domain in the interval 206-446; it reads LQPFLAPMVS…WVRSGGLTFP (241 aa). FAD is bound by residues Arg-350, 382 to 385, and 416 to 419; these read RAFS and GLCS. Residues Thr-460, 515–516, 521–525, and Asp-558 each bind NADP(+); these read SR and KVYVQ. Residue Trp-596 coordinates FAD.

Belongs to the NADPH-dependent diflavin oxidoreductase NDOR1 family. It in the N-terminal section; belongs to the flavodoxin family. This sequence in the C-terminal section; belongs to the flavoprotein pyridine nucleotide cytochrome reductase family. As to quaternary structure, interacts with CIAPIN1; as part of the cytosolic iron-sulfur (Fe-S) protein assembly (CIA) machinery. Interacts with DCPS. FAD is required as a cofactor. FMN serves as cofactor.

Its subcellular location is the cytoplasm. The protein resides in the perinuclear region. The catalysed reaction is 2 oxidized [2Fe-2S]-[protein] + NADPH = 2 reduced [2Fe-2S]-[protein] + NADP(+) + H(+). Its function is as follows. NADPH-dependent reductase which is a central component of the cytosolic iron-sulfur (Fe-S) protein assembly (CIA) machinery. Transfers electrons from NADPH via its FAD and FMN prosthetic groups to the [2Fe-2S] cluster of CIAPIN1, another key component of the CIA machinery. In turn, this reduced cluster provides electrons for assembly of cytosolic iron-sulfur cluster proteins. It can also reduce the [2Fe-2S] cluster of CISD1 and activate this protein implicated in Fe/S cluster repair. In vitro can fully activate methionine synthase/MTR in the presence of soluble cytochrome b5/CYB5A. This chain is NADPH-dependent diflavin oxidoreductase 1, found in Bos taurus (Bovine).